Consider the following 476-residue polypeptide: 8-amino-7-oxononanoate synthase (476 aa).

A substrate-binding site is contributed by Arg-24. A pyridoxal 5'-phosphate-binding site is contributed by 171–172 (GF). Substrate is bound at residue His-210. Pyridoxal 5'-phosphate-binding positions include Ser-260, 285–288 (DDAH), and 316–319 (TLSK). Lys-319 carries the N6-(pyridoxal phosphate)lysine modification. Thr-427 contributes to the substrate binding site. Residues 474-476 (PKL) carry the Peroxisomal targeting signal PTS1 motif.

The protein belongs to the class-II pyridoxal-phosphate-dependent aminotransferase family. BioF subfamily. In terms of assembly, monomer. The cofactor is pyridoxal 5'-phosphate.

It is found in the cytoplasm. The protein resides in the cytosol. Its subcellular location is the peroxisome. It carries out the reaction 6-carboxyhexanoyl-[ACP] + L-alanine + H(+) = (8S)-8-amino-7-oxononanoate + holo-[ACP] + CO2. Its pathway is cofactor biosynthesis; biotin biosynthesis; 8-amino-7-oxononanoate from pimeloyl-CoA: step 1/1. In terms of biological role, catalyzes the decarboxylative condensation of pimeloyl-[acyl-carrier protein] and L-alanine to produce 8-amino-7-oxononanoate (AON), [acyl-carrier protein], and carbon dioxide. Required for the biosynthesis of D-biotin that prevents light-mediated cell death and modulates defense gene expression, probably by avoiding hydrogen peroxide H(2)O(2) accumulation. This Arabidopsis thaliana (Mouse-ear cress) protein is 8-amino-7-oxononanoate synthase.